The primary structure comprises 271 residues: Acetylglutamate kinase (271 aa).

Substrate-binding positions include 41–42 (GG), R63, and N166.

It belongs to the acetylglutamate kinase family. ArgB subfamily.

It localises to the cytoplasm. It catalyses the reaction N-acetyl-L-glutamate + ATP = N-acetyl-L-glutamyl 5-phosphate + ADP. Its pathway is amino-acid biosynthesis; L-arginine biosynthesis; N(2)-acetyl-L-ornithine from L-glutamate: step 2/4. Catalyzes the ATP-dependent phosphorylation of N-acetyl-L-glutamate. This chain is Acetylglutamate kinase, found in Anaeromyxobacter sp. (strain Fw109-5).